A 38-amino-acid chain; its full sequence is Potassium channel toxin alpha-KTx 3.12 (38 aa).

Intrachain disulfides connect cysteine 8–cysteine 28, cysteine 14–cysteine 33, and cysteine 18–cysteine 35. The residue at position 38 (lysine 38) is a Lysine amide.

The protein belongs to the short scorpion toxin superfamily. Potassium channel inhibitor family. Alpha-KTx 03 subfamily. Expressed by the venom gland.

Its subcellular location is the secreted. In terms of biological role, potent inhibitor of voltage-dependent potassium channels, with a preference for Kv1.3/KCNA3 versus Kv1.2/KCNA2. The sequence is that of Potassium channel toxin alpha-KTx 3.12 from Androctonus amoreuxi (African fattail scorpion).